A 396-amino-acid polypeptide reads, in one-letter code: Ribosomal RNA large subunit methyltransferase I (396 aa).

The PUA domain occupies 2 to 79 (AVRIKLKPGR…REEEIDREFF (78 aa)).

This sequence belongs to the methyltransferase superfamily. RlmI family.

It is found in the cytoplasm. It carries out the reaction cytidine(1962) in 23S rRNA + S-adenosyl-L-methionine = 5-methylcytidine(1962) in 23S rRNA + S-adenosyl-L-homocysteine + H(+). In terms of biological role, specifically methylates the cytosine at position 1962 (m5C1962) of 23S rRNA. This chain is Ribosomal RNA large subunit methyltransferase I, found in Shewanella sp. (strain MR-7).